Reading from the N-terminus, the 194-residue chain is Xanthine phosphoribosyltransferase (194 aa).

Positions 20 and 27 each coordinate xanthine. Position 128 to 132 (128 to 132 (ANGQA)) interacts with 5-phospho-alpha-D-ribose 1-diphosphate. Lys-156 contacts xanthine.

The protein belongs to the purine/pyrimidine phosphoribosyltransferase family. Xpt subfamily. Homodimer.

Its subcellular location is the cytoplasm. The catalysed reaction is XMP + diphosphate = xanthine + 5-phospho-alpha-D-ribose 1-diphosphate. It functions in the pathway purine metabolism; XMP biosynthesis via salvage pathway; XMP from xanthine: step 1/1. Its function is as follows. Converts the preformed base xanthine, a product of nucleic acid breakdown, to xanthosine 5'-monophosphate (XMP), so it can be reused for RNA or DNA synthesis. This chain is Xanthine phosphoribosyltransferase, found in Bacillus licheniformis (strain ATCC 14580 / DSM 13 / JCM 2505 / CCUG 7422 / NBRC 12200 / NCIMB 9375 / NCTC 10341 / NRRL NRS-1264 / Gibson 46).